The chain runs to 268 residues: Tryptophan synthase alpha chain (268 aa).

Residues Glu-49 and Asp-60 each act as proton acceptor in the active site.

It belongs to the TrpA family. In terms of assembly, tetramer of two alpha and two beta chains.

It catalyses the reaction (1S,2R)-1-C-(indol-3-yl)glycerol 3-phosphate + L-serine = D-glyceraldehyde 3-phosphate + L-tryptophan + H2O. It participates in amino-acid biosynthesis; L-tryptophan biosynthesis; L-tryptophan from chorismate: step 5/5. Functionally, the alpha subunit is responsible for the aldol cleavage of indoleglycerol phosphate to indole and glyceraldehyde 3-phosphate. This Salmonella paratyphi A (strain ATCC 9150 / SARB42) protein is Tryptophan synthase alpha chain.